A 211-amino-acid chain; its full sequence is Recombination protein RecR (211 aa).

The C4-type zinc finger occupies 70–85; sequence CRECFLITDREVCPIC. Residues 93 to 190 enclose the Toprim domain; it reads KFICVVEESQ…KITRTAYGFQ (98 aa).

The protein belongs to the RecR family.

In terms of biological role, may play a role in DNA repair. It seems to be involved in an RecBC-independent recombinational process of DNA repair. It may act with RecF and RecO. This Aquifex aeolicus (strain VF5) protein is Recombination protein RecR.